We begin with the raw amino-acid sequence, 238 residues long: Probable transcriptional regulatory protein SSU98_0387 (238 aa).

This sequence belongs to the TACO1 family. YeeN subfamily.

It is found in the cytoplasm. This chain is Probable transcriptional regulatory protein SSU98_0387, found in Streptococcus suis (strain 98HAH33).